Here is a 525-residue protein sequence, read N- to C-terminus: ATP synthase subunit alpha (525 aa).

Residue 169–176 (GDRQTGKT) participates in ATP binding.

It belongs to the ATPase alpha/beta chains family. As to quaternary structure, F-type ATPases have 2 components, CF(1) - the catalytic core - and CF(0) - the membrane proton channel. CF(1) has five subunits: alpha(3), beta(3), gamma(1), delta(1), epsilon(1). CF(0) has three main subunits: a(1), b(2) and c(9-12). The alpha and beta chains form an alternating ring which encloses part of the gamma chain. CF(1) is attached to CF(0) by a central stalk formed by the gamma and epsilon chains, while a peripheral stalk is formed by the delta and b chains.

The protein resides in the cell membrane. The catalysed reaction is ATP + H2O + 4 H(+)(in) = ADP + phosphate + 5 H(+)(out). Its function is as follows. Produces ATP from ADP in the presence of a proton gradient across the membrane. The alpha chain is a regulatory subunit. This chain is ATP synthase subunit alpha, found in Mycoplasma capricolum subsp. capricolum (strain California kid / ATCC 27343 / NCTC 10154).